We begin with the raw amino-acid sequence, 164 residues long: Flavodoxin (164 aa).

Positions 4–160 (IGIFFGTDSG…RISKWVEQVK (157 aa)) constitute a Flavodoxin-like domain.

It belongs to the flavodoxin family. Requires FMN as cofactor.

Low-potential electron donor to a number of redox enzymes. The polypeptide is Flavodoxin (fldA) (Helicobacter pylori (strain ATCC 700392 / 26695) (Campylobacter pylori)).